A 120-amino-acid polypeptide reads, in one-letter code: UPF0102 protein PTH_1707 (120 aa).

The protein belongs to the UPF0102 family.

The sequence is that of UPF0102 protein PTH_1707 from Pelotomaculum thermopropionicum (strain DSM 13744 / JCM 10971 / SI).